The sequence spans 442 residues: Protein PRRC1-A (442 aa).

The segment at 1 to 27 is disordered; the sequence is MMEESGIETTPPSTPPPSTIGTSVPAA.

This sequence belongs to the PRRC1 family.

The protein localises to the golgi apparatus. This is Protein PRRC1-A (prrc1-a) from Xenopus laevis (African clawed frog).